A 172-amino-acid polypeptide reads, in one-letter code: Cytidylate kinase (172 aa).

7–15 (GPPGSGTST) contributes to the ATP binding site.

Belongs to the cytidylate kinase family. Type 2 subfamily.

The protein localises to the cytoplasm. The catalysed reaction is CMP + ATP = CDP + ADP. It carries out the reaction dCMP + ATP = dCDP + ADP. The sequence is that of Cytidylate kinase from Methanothrix thermoacetophila (strain DSM 6194 / JCM 14653 / NBRC 101360 / PT) (Methanosaeta thermophila).